The following is a 241-amino-acid chain: RxLR effector protein SFI5 (241 aa).

The first 20 residues, 1–20 (MLRQARPLVVLIAVTFLVAS), serve as a signal peptide directing secretion. The RxLR-dEER signature appears at 44–62 (RLLRTHHATIKVNADSEER).

The protein belongs to the RxLR effector family.

It is found in the secreted. Its subcellular location is the host cell membrane. Functionally, effector that suppresses flg22-induced post-translational MAP kinase activation in tomato but not in Arabidopsis. The perception of highly conserved pathogen- or microbe-associated molecular patterns (PAMPs/MAMPs), such as flg22, triggers converging signaling pathways recruiting MAP kinase cascades and inducing transcriptional re-programming, yielding a generic antimicrobial response. The sequence is that of RxLR effector protein SFI5 from Phytophthora infestans (strain T30-4) (Potato late blight agent).